A 246-amino-acid polypeptide reads, in one-letter code: MTTHNFEHPLNEKTRIYLRVESLLRQAHTAASFSEPHQHQLFFRSIFDLIEIFEQIQLKSELAKDIEKQRLLYRSWLNVEGVDQATLRSLLDEADRTHAALMQAPRFGQSLKEDRFLSSIRQRFSLPGGSCCFDLPALHYWLNLPIERKIEDARQWLDSLKPLSDALNLWLKLAREAGHFRSQTALNGFFQSDAEEANILRLHIPMEYGVYPMISGHKNRFAIKFINFETGQACSQDVHFELAVCS.

Belongs to the ZapD family. As to quaternary structure, interacts with FtsZ.

Its subcellular location is the cytoplasm. Its function is as follows. Cell division factor that enhances FtsZ-ring assembly. Directly interacts with FtsZ and promotes bundling of FtsZ protofilaments, with a reduction in FtsZ GTPase activity. In Vibrio vulnificus (strain CMCP6), this protein is Cell division protein ZapD.